The chain runs to 325 residues: uncharacterized protein (325 aa).

Disordered regions lie at residues 32–65 (LSTPVYRKKSRRSVSQSRPTSIIEPPKRSIVPPI) and 99–152 (GDSL…ASSG). The Globin domain maps to 153-291 (LVPSLNRLRI…LFTGVRDGYY (139 aa)).

This is an uncharacterized protein from Caenorhabditis elegans.